A 510-amino-acid chain; its full sequence is Lysine--tRNA ligase (510 aa).

Mg(2+)-binding residues include Glu420 and Glu427.

This sequence belongs to the class-II aminoacyl-tRNA synthetase family. As to quaternary structure, homodimer. The cofactor is Mg(2+).

It is found in the cytoplasm. The catalysed reaction is tRNA(Lys) + L-lysine + ATP = L-lysyl-tRNA(Lys) + AMP + diphosphate. The protein is Lysine--tRNA ligase of Ralstonia nicotianae (strain ATCC BAA-1114 / GMI1000) (Ralstonia solanacearum).